The following is a 124-amino-acid chain: UPF0231 protein Shewmr7_3366 (124 aa).

It belongs to the UPF0231 family.

The chain is UPF0231 protein Shewmr7_3366 from Shewanella sp. (strain MR-7).